The following is a 2170-amino-acid chain: Supervillin (2170 aa).

Residues 1–167 (MKRKERIARR…NSRHSRTESG (167 aa)) form an interaction with MYLK region. Disordered regions lie at residues 37 to 94 (EDTP…HSLE), 107 to 327 (RRRQ…QSES), 413 to 444 (PEPL…NKDL), 511 to 546 (DYTG…GAEA), and 567 to 643 (RASK…EDEE). Ser50 carries the phosphoserine modification. Polar residues-rich tracts occupy residues 63-73 (PGSSLEKQTPS) and 81-90 (GIHSSGSMDT). The segment covering 134-166 (SRKDPDVTERRGKSDKQEEQSKDANSRHSRTES) has biased composition (basic and acidic residues). Over residues 167 to 195 (GPRTSLVASQDCTPLGSNMSDQEQLLNVE) the composition is skewed to polar residues. 3 positions are modified to phosphoserine: Ser220, Ser227, and Ser241. The span at 230–241 (QIPSSPLQQPAS) shows a compositional bias: polar residues. Basic and acidic residues-rich tracts occupy residues 261-272 (PTHEWFLQRDSE) and 286-297 (KVREKLVKEESA). Over residues 298 to 313 (RSSPELTSESLTQRRQ) the composition is skewed to polar residues. Ser299 and Ser300 each carry phosphoserine. A compositionally biased stretch (basic and acidic residues) spans 427 to 444 (EDDRLVRGHKDPSGNKDL). Basic and acidic residues-rich tracts occupy residues 570 to 582 (KKPE…ERSA) and 606 to 615 (ESRKTSERFR). Phosphoserine is present on residues Ser632, Ser666, Ser728, and Ser761. The disordered stretch occupies residues 743-771 (ASAHQKALARDQANEGRESAEPGEPDSST). The span at 750–762 (LARDQANEGRESA) shows a compositional bias: basic and acidic residues. A Phosphotyrosine modification is found at Tyr809. Thr811 is subject to Phosphothreonine. Phosphoserine occurs at positions 857, 877, and 881. A disordered region spans residues 887–909 (AWRPLVEHSGSKGMPGESGKTES). 4 positions are modified to phosphoserine: Ser960, Ser1011, Ser1031, and Ser1077. Residues 1117-1137 (HTQEVEQSLKKKRVTESRESQ) are disordered. The span at 1119 to 1137 (QEVEQSLKKKRVTESRESQ) shows a compositional bias: basic and acidic residues. Arg1159 carries the omega-N-methylarginine modification. Phosphoserine is present on residues Ser1181 and Ser1184. Position 1186 is a phosphothreonine (Thr1186). Ser1190, Ser1278, and Ser1361 each carry phosphoserine. The segment at 1375-1643 (SNINLRSVNL…KFLDWTELKR (269 aa)) is interaction with NEB. Gelsolin-like repeat units follow at residues 1397 to 1496 (KKLM…LGGQ), 1516 to 1638 (IETN…FLDW), 1708 to 1818 (VSVD…FQGG), 1837 to 1938 (WRLY…LGRR), and 1971 to 2078 (ATEF…FPSW). In terms of domain architecture, HP spans 2107–2170 (KLCKTIYPLA…VNLKKSKGLF (64 aa)).

It belongs to the villin/gelsolin family. As to quaternary structure, associates with F-actin. Interacts with NEB. Interacts with MYH9. Interacts with MYLK. Interacts with TASOR. Interacts with TRIP6. Interacts with DYNLT1. Interacts with KIF14; at midbody during cytokinesis. As to expression, expressed in the heart, tongue and granular cells within the cerebellum.

The protein localises to the cell membrane. The protein resides in the cytoplasm. It localises to the cytoskeleton. It is found in the cell projection. Its subcellular location is the invadopodium. The protein localises to the podosome. The protein resides in the midbody. It localises to the cleavage furrow. In terms of biological role, forms a high-affinity link between the actin cytoskeleton and the membrane. Is among the first costameric proteins to assemble during myogenesis and it contributes to myogenic membrane structure and differentiation. Appears to be involved in myosin II assembly. May modulate myosin II regulation through MLCK during cell spreading, an initial step in cell migration. May play a role in invadopodial function. May be involved in modulation of focal adhesions. Supervillin-mediated down-regulation of focal adhesions involves binding to TRIP6. Plays a role in cytokinesis through KIF14 interaction. In Mus musculus (Mouse), this protein is Supervillin (Svil).